The primary structure comprises 429 residues: Fez family zinc finger protein 1 (429 aa).

Positions 29–44 match the Engrailed homology 1 repressor motif; the sequence is PLAFSIERIMARTPEP. 6 C2H2-type zinc fingers span residues 247 to 269, 275 to 297, 303 to 325, 331 to 353, 359 to 381, and 387 to 410; these read FTCE…MPVH, FVCK…KIIH, HKCN…TRIH, FICE…KLTH, FKCN…MHTH, and FTCP…RKLH. The tract at residues 409–429 is disordered; sequence LHDISPGPHSPPTPTGNTEGQ.

Belongs to the krueppel C2H2-type zinc-finger protein family.

It is found in the nucleus. In terms of biological role, transcription repressor. Involved in the development of the forebrain region. This chain is Fez family zinc finger protein 1 (fezf1), found in Danio rerio (Zebrafish).